Here is a 176-residue protein sequence, read N- to C-terminus: Ferritin, middle subunit (176 aa).

The 150-residue stretch at 7-156 (QNYHRDCEAA…DFITNLSRMD (150 aa)) folds into the Ferritin-like diiron domain. Residues Glu24, Glu59, His62, Glu104, and Gln138 each coordinate Fe cation.

This sequence belongs to the ferritin family. As to quaternary structure, in liver, forms a heteromer consisting of middle and heavy subunits. In spleen, forms a homomer. The functional molecule forms a roughly spherical shell with a diameter of 12 nm and contains a central cavity into which the insoluble mineral iron core is deposited. In terms of tissue distribution, liver and spleen (at protein level).

It carries out the reaction 4 Fe(2+) + O2 + 4 H(+) = 4 Fe(3+) + 2 H2O. Its function is as follows. Stores iron in a soluble, non-toxic, readily available form. Important for iron homeostasis. Has ferroxidase activity. Iron is taken up in the ferrous form and deposited as ferric hydroxides after oxidation. This is Ferritin, middle subunit from Trematomus newnesi (Dusky notothen).